Consider the following 464-residue polypeptide: Growth hormone-releasing hormone receptor (464 aa).

An N-terminal signal peptide occupies residues 1–22 (MDSLLWATWVLCLLNLWGVALG). The Extracellular portion of the chain corresponds to 23 to 130 (HLHLECDFIT…EEKSYFSTVK (108 aa)). Disulfide bonds link cysteine 41–cysteine 64, cysteine 55–cysteine 96, and cysteine 78–cysteine 112. Asparagine 50 is a glycosylation site (N-linked (GlcNAc...) asparagine). Residues 131–151 (IIYTTGHSISIVALCVAIAIL) traverse the membrane as a helical segment. The Cytoplasmic segment spans residues 152–167 (VALRRLHCPRNYIHTQ). Residues 168–188 (LFATFILKASAVFLKDAAVFQ) form a helical membrane-spanning segment. At 189–210 (GDSTDHCSMSTILCKVSVAVSH) the chain is on the extracellular side. A helical transmembrane segment spans residues 211-231 (FATMTNFSWLLAEAVYLSCLL). At 232–240 (ASTSPRSKP) the chain is on the cytoplasmic side. A helical membrane pass occupies residues 241 to 261 (AFWWLVLAGWGLPVLCTGTWV). Topologically, residues 262–283 (GCKLAFEDTACWDLDDSSPYWW) are extracellular. A helical membrane pass occupies residues 284–304 (IIKGPIVLSVGVNFGLFLNII). Residues 305–372 (CILLRKLGPA…QLPWRLSKST (68 aa)) lie on the Cytoplasmic side of the membrane. A helical transmembrane segment spans residues 373–393 (LLLIPLFGIHYIIFNFLPDSA). Topologically, residues 394-398 (GLGIR) are extracellular. Residues 399 to 419 (LPLELGLGSFQGFVVAVLYCF) form a helical membrane-spanning segment. Over 420–464 (LNQEVRTEISRKWYGHDPELLPARRTCTEWTTPPRSRVKVLTSEC) the chain is Cytoplasmic.

The protein belongs to the G-protein coupled receptor 2 family. Pituitary gland.

It is found in the cell membrane. Its function is as follows. Receptor for GRF, coupled to G proteins which activate adenylyl cyclase. Stimulates somatotroph cell growth, growth hormone gene transcription and growth hormone secretion. In Rattus norvegicus (Rat), this protein is Growth hormone-releasing hormone receptor (Ghrhr).